A 202-amino-acid chain; its full sequence is Adapter protein MecA 2 (202 aa).

Belongs to the MecA family. In terms of assembly, homodimer.

In terms of biological role, enables the recognition and targeting of unfolded and aggregated proteins to the ClpC protease or to other proteins involved in proteolysis. Acts negatively in the development of competence by binding ComK and recruiting it to the ClpCP protease. When overexpressed, inhibits sporulation. Also involved in Spx degradation by ClpC. The polypeptide is Adapter protein MecA 2 (mecA2) (Bacillus cereus (strain ATCC 14579 / DSM 31 / CCUG 7414 / JCM 2152 / NBRC 15305 / NCIMB 9373 / NCTC 2599 / NRRL B-3711)).